A 216-amino-acid polypeptide reads, in one-letter code: Adenylate kinase (216 aa).

Position 10 to 15 (10 to 15 (GAGKGT)) interacts with ATP. Residues 30 to 59 (STGDMLRAAVGVGTEVGKRAKAVMDAGKLV) form an NMP region. Residues T31, R36, 57–59 (KLV), 85–88 (GFPR), and Q92 each bind AMP. Positions 126 to 163 (GRYTCAQCGTVYHDTDKVPVEEGVCDKCGSTHFKRRPD) are LID. R127 is an ATP binding site. Residues C130 and C133 each contribute to the Zn(2+) site. 136–137 (VY) is a binding site for ATP. The Zn(2+) site is built by C150 and C153. The AMP site is built by R160 and R172. Position 200 (A200) interacts with ATP.

It belongs to the adenylate kinase family. As to quaternary structure, monomer.

Its subcellular location is the cytoplasm. It carries out the reaction AMP + ATP = 2 ADP. The protein operates within purine metabolism; AMP biosynthesis via salvage pathway; AMP from ADP: step 1/1. Its function is as follows. Catalyzes the reversible transfer of the terminal phosphate group between ATP and AMP. Plays an important role in cellular energy homeostasis and in adenine nucleotide metabolism. The protein is Adenylate kinase of Rhizobium etli (strain CIAT 652).